A 1281-amino-acid chain; its full sequence is Angiotensin-converting enzyme (1281 aa).

The signal sequence occupies residues Met-1 to Ala-17. The Extracellular portion of the chain corresponds to Leu-18–Ala-1241. 2 consecutive Peptidase M2 domains span residues Asp-28 to Pro-610 and Ile-629 to Pro-1208. 5 N-linked (GlcNAc...) asparagine glycosylation sites follow: Asn-42, Asn-62, Asn-80, Asn-99, and Asn-148. The cysteines at positions 145 and 151 are disulfide-linked. Tyr-217 is a binding site for chloride. N-linked (GlcNAc...) asparagine glycosylation is present at Asn-304. Cys-345 and Cys-363 are oxidised to a cystine. Zn(2+) is bound at residue His-376. Glu-377 (proton acceptor 1) is an active-site residue. Residues His-380 and Glu-404 each coordinate Zn(2+). Asn-495 carries an N-linked (GlcNAc...) asparagine glycan. The active-site Proton donor 1 is His-506. A chloride-binding site is contributed by Arg-515. A disulfide bridge connects residues Cys-531 and Cys-543. 6 N-linked (GlcNAc...) asparagine glycosylation sites follow: Asn-535, Asn-573, Asn-601, Asn-643, Asn-663, and Asn-746. A disulfide bridge connects residues Cys-743 and Cys-749. Chloride contacts are provided by Arg-777 and Tyr-815. Residues Cys-943 and Cys-961 are joined by a disulfide bond. His-974 provides a ligand contact to Zn(2+). Residue Glu-975 is the Proton acceptor 2 of the active site. Residues His-978 and Glu-1002 each coordinate Zn(2+). Chloride is bound by residues Trp-1076 and Arg-1080. Residue His-1104 is the Proton donor 2 of the active site. Arg-1113 serves as a coordination point for chloride. A disulfide bridge links Cys-1129 with Cys-1141. N-linked (GlcNAc...) asparagine glycosylation is present at Asn-1177. The interval Asn-1201 to Thr-1240 is juxtamembrane stalk. A helical membrane pass occupies residues Gly-1242–Val-1262. At Lys-1263–Lys-1281 the chain is on the cytoplasmic side.

This sequence belongs to the peptidase M2 family. The cofactor is Zn(2+). Chloride serves as cofactor.

The protein resides in the cell membrane. Its subcellular location is the cytoplasm. It catalyses the reaction Release of a C-terminal dipeptide, oligopeptide-|-Xaa-Yaa, when Xaa is not Pro, and Yaa is neither Asp nor Glu. Thus, conversion of angiotensin I to angiotensin II, with increase in vasoconstrictor activity, but no action on angiotensin II.. The catalysed reaction is angiotensin I + H2O = L-histidyl-L-leucine + angiotensin II. The enzyme catalyses bradykinin + H2O = L-Phe-L-Arg + bradykinin(1-7). It carries out the reaction substance P + H2O = substance P(1-9) + L-Leu-L-Met-NH2. It catalyses the reaction substance P + H2O = substance P(1-8) + Gly-L-Leu-L-Met-NH2. The catalysed reaction is substance P + H2O = L-Phe-L-Phe-Gly-L-Leu-L-Met-NH2 + substance P(1-6). The enzyme catalyses neurotensin + H2O = neurotensin(1-11) + L-isoleucyl-L-leucine. It carries out the reaction goralatide + H2O = N-acetyl-L-seryl-L-aspartate + L-lysyl-L-proline. It catalyses the reaction Met-enkephalin + H2O = L-phenylalanyl-L-methionine + L-tyrosylglycylglycine. The catalysed reaction is Leu-enkephalin + H2O = L-tyrosylglycylglycine + L-phenylalanyl-L-leucine. The enzyme catalyses Met-enkephalin-Arg-Phe + H2O = L-arginyl-L-phenylalanine + Met-enkephalin. Functionally, dipeptidyl carboxypeptidase that removes dipeptides from the C-terminus of a variety of circulating hormones, such as angiotensin I, bradykinin or enkephalins, thereby playing a key role in the regulation of blood pressure, electrolyte homeostasis or synaptic plasticity. Composed of two similar catalytic domains, each possessing a functional active site, with different selectivity for substrates. Plays a major role in the angiotensin-renin system that regulates blood pressure and sodium retention by the kidney by converting angiotensin I to angiotensin II, resulting in an increase of the vasoconstrictor activity of angiotensin. Also able to inactivate bradykinin, a potent vasodilator, and therefore enhance the blood pressure response. Acts as a regulator of synaptic transmission by mediating cleavage of neuropeptide hormones, such as substance P, neurotensin or enkephalins. Catalyzes degradation of different enkephalin neuropeptides (Met-enkephalin, Leu-enkephalin, Met-enkephalin-Arg-Phe and possibly Met-enkephalin-Arg-Gly-Leu). Also acts as a regulator of hematopoietic stem cell differentiation by mediating degradation of hemoregulatory peptide N-acetyl-SDKP (AcSDKP). The chain is Angiotensin-converting enzyme from Gallus gallus (Chicken).